Here is a 439-residue protein sequence, read N- to C-terminus: Divalent metal cation transporter MntH 1 (439 aa).

The next 9 helical transmembrane spans lie at 64 to 84, 139 to 161, 171 to 191, 214 to 234, 262 to 282, 300 to 320, 359 to 379, 380 to 400, and 418 to 438; these read FGYA…LLQS, LLGV…VLAL, AIVL…LVLI, PLYL…LYLH, IGSL…AAAA, LLDP…ALLA, LVPA…KLLV, LSQV…IRFS, and LAWS…YFWF.

It belongs to the NRAMP family.

The protein resides in the cell inner membrane. In terms of biological role, h(+)-stimulated, divalent metal cation uptake system. The sequence is that of Divalent metal cation transporter MntH 1 from Pseudomonas aeruginosa (strain ATCC 15692 / DSM 22644 / CIP 104116 / JCM 14847 / LMG 12228 / 1C / PRS 101 / PAO1).